Reading from the N-terminus, the 231-residue chain is Flagellar L-ring protein (231 aa).

The first 18 residues, 1 to 18 (MNRLLSVFALGGAVLLAG), serve as a signal peptide directing secretion. A lipid anchor (N-palmitoyl cysteine) is attached at cysteine 19. The S-diacylglycerol cysteine moiety is linked to residue cysteine 19.

Belongs to the FlgH family. As to quaternary structure, the basal body constitutes a major portion of the flagellar organelle and consists of four rings (L,P,S, and M) mounted on a central rod.

It localises to the cell outer membrane. It is found in the bacterial flagellum basal body. Assembles around the rod to form the L-ring and probably protects the motor/basal body from shearing forces during rotation. This Pseudomonas putida (strain ATCC 700007 / DSM 6899 / JCM 31910 / BCRC 17059 / LMG 24140 / F1) protein is Flagellar L-ring protein.